We begin with the raw amino-acid sequence, 107 residues long: Probable antitoxin TacA (107 aa).

The protein belongs to the TacA antitoxin family. In terms of assembly, forms a complex with cognate antitoxin TacT.

Functionally, probable antitoxin component of a type II toxin-antitoxin (TA) system. Should neutralize cognate toxin TacT (y4aS). The sequence is that of Probable antitoxin TacA from Sinorhizobium fredii (strain NBRC 101917 / NGR234).